The following is a 247-amino-acid chain: Neurotrophic factor BDNF precursor form (247 aa).

Residues Met-1–Ala-18 form the signal peptide. Residues Ala-19–Arg-128 constitute a propeptide that is removed on maturation. Asn-121 carries N-linked (GlcNAc...) asparagine glycosylation. 3 disulfide bridges follow: Cys-141/Cys-208, Cys-186/Cys-237, and Cys-196/Cys-239.

This sequence belongs to the NGF-beta family. As to quaternary structure, monomers and homodimers. Binds to NTRK2/TRKB. Can form heterodimers with other neurotrophin family members, such as NTF3 and NTF4 (in vitro), but the physiological relevance of this is not clear. BDNF precursor form: interacts with the heterodimer formed by NGFR and SORCS2. Mature BDNF has much lower affinity for the heterodimer formed by NGFR and SORCS2. Post-translationally, N-glycosylated and glycosulfated, contrary to mature BDNF. Mature BDNF is produced by proteolytic removal of the propeptide, catalyzed by a FURIN family member. In addition, the precursor form is proteolytically cleaved within the propeptide, but this is not an obligatory intermediate for the production of mature BDNF. Can be converted into mature BDNF by plasmin (PLG).

It is found in the secreted. Its function is as follows. Important signaling molecule that activates signaling cascades downstream of NTRK2. During development, promotes the survival and differentiation of selected neuronal populations of the peripheral and central nervous systems. Participates in axonal growth, pathfinding and in the modulation of dendritic growth and morphology. Major regulator of synaptic transmission and plasticity at adult synapses in many regions of the CNS. The versatility of BDNF is emphasized by its contribution to a range of adaptive neuronal responses including long-term potentiation (LTP), long-term depression (LTD), certain forms of short-term synaptic plasticity, as well as homeostatic regulation of intrinsic neuronal excitability. Important signaling molecule that activates signaling cascades downstream of NTRK2. Activates signaling cascades via the heterodimeric receptor formed by NGFR and SORCS2. Signaling via NGFR and SORCS2 plays a role in synaptic plasticity and long-term depression (LTD). Binding to NGFR and SORCS2 promotes neuronal apoptosis. Promotes neuronal growth cone collapse. This is Neurotrophic factor BDNF precursor form (BDNF) from Felis catus (Cat).